Reading from the N-terminus, the 333-residue chain is 4-hydroxy-3-methylbut-2-enyl diphosphate reductase (333 aa).

Cys-34 lines the [4Fe-4S] cluster pocket. Residues His-63 and His-96 each coordinate (2E)-4-hydroxy-3-methylbut-2-enyl diphosphate. Dimethylallyl diphosphate-binding residues include His-63 and His-96. Residues His-63 and His-96 each contribute to the isopentenyl diphosphate site. A [4Fe-4S] cluster-binding site is contributed by Cys-118. His-146 serves as a coordination point for (2E)-4-hydroxy-3-methylbut-2-enyl diphosphate. A dimethylallyl diphosphate-binding site is contributed by His-146. His-146 is a binding site for isopentenyl diphosphate. The Proton donor role is filled by Glu-148. Thr-186 is a (2E)-4-hydroxy-3-methylbut-2-enyl diphosphate binding site. Residue Cys-216 coordinates [4Fe-4S] cluster. The (2E)-4-hydroxy-3-methylbut-2-enyl diphosphate site is built by Ser-244, Ser-245, Asn-246, and Ser-289. 4 residues coordinate dimethylallyl diphosphate: Ser-244, Ser-245, Asn-246, and Ser-289. Residues Ser-244, Ser-245, Asn-246, and Ser-289 each contribute to the isopentenyl diphosphate site.

It belongs to the IspH family. It depends on [4Fe-4S] cluster as a cofactor.

It catalyses the reaction isopentenyl diphosphate + 2 oxidized [2Fe-2S]-[ferredoxin] + H2O = (2E)-4-hydroxy-3-methylbut-2-enyl diphosphate + 2 reduced [2Fe-2S]-[ferredoxin] + 2 H(+). It carries out the reaction dimethylallyl diphosphate + 2 oxidized [2Fe-2S]-[ferredoxin] + H2O = (2E)-4-hydroxy-3-methylbut-2-enyl diphosphate + 2 reduced [2Fe-2S]-[ferredoxin] + 2 H(+). The protein operates within isoprenoid biosynthesis; dimethylallyl diphosphate biosynthesis; dimethylallyl diphosphate from (2E)-4-hydroxy-3-methylbutenyl diphosphate: step 1/1. It participates in isoprenoid biosynthesis; isopentenyl diphosphate biosynthesis via DXP pathway; isopentenyl diphosphate from 1-deoxy-D-xylulose 5-phosphate: step 6/6. Its function is as follows. Catalyzes the conversion of 1-hydroxy-2-methyl-2-(E)-butenyl 4-diphosphate (HMBPP) into a mixture of isopentenyl diphosphate (IPP) and dimethylallyl diphosphate (DMAPP). Acts in the terminal step of the DOXP/MEP pathway for isoprenoid precursor biosynthesis. This is 4-hydroxy-3-methylbut-2-enyl diphosphate reductase from Mycobacterium sp. (strain KMS).